The sequence spans 581 residues: Protein LYRIC (581 aa).

At 1 to 49 (MAARSWQDELAQQAEEGSARLRELLSVGLGFLRTELGLDLGLEPKRYPS) the chain is on the lumenal side. Positions 1–71 (MAARSWQDEL…LLLFLLGYGW (71 aa)) are activation of NF-kappa-B. A helical transmembrane segment spans residues 50–70 (WVILVGTGALGLLLLFLLGYG). Residues 71–581 (WAAACAGARK…KKKKKARRET (511 aa)) are Cytoplasmic-facing. The interaction with BCCIP stretch occupies residues 72–168 (AAACAGARKK…EKSKKNKKKS (97 aa)). Positions 77 to 221 (GARKKRRSPP…DSGSLDSTIP (145 aa)) are disordered. The segment at 100 to 204 (EDPAQLKNLR…ISHREKRQQR (105 aa)) is interaction with RELA. Residues 108–126 (LRSEEQKKKNRKKLPEKPK) are compositionally biased toward basic and acidic residues. A Phosphothreonine modification is found at threonine 142. Residues 159–168 (EKSKKNKKKS) show a composition bias toward basic residues. Residue serine 179 is modified to Phosphoserine. A compositionally biased stretch (basic residues) spans 197–207 (HREKRQQRKRD). 2 positions are modified to phosphoserine: serine 215 and serine 250. The residue at position 263 (lysine 263) is an N6-acetyllysine. Residues 280–581 (VNGGGWSEKS…KKKKKARRET (302 aa)) form a disordered region. A phosphoserine mark is found at serine 297, serine 305, and serine 310. A compositionally biased stretch (polar residues) spans 318–331 (QSAWTQDPGDTNAN). Residues serine 343 and serine 368 each carry the phosphoserine modification. 2 stretches are compositionally biased toward polar residues: residues 353-371 (EPVSQSTTSDYQWDGSRNQ) and 382-393 (NGLSSADPSSDW). Residues 380–442 (GLNGLSSADP…EGALPTGKSK (63 aa)) are lung-homing for mammary tumors. Residues serine 414 and serine 425 each carry the phosphoserine modification. Basic and acidic residues predominate over residues 421 to 433 (DQKDSDDDKEKGE). A compositionally biased stretch (basic residues) spans 440 to 450 (KSKKKKKKKKK). Residues serine 456, serine 477, serine 493, and serine 495 each carry the phosphoserine modification. Composition is skewed to polar residues over residues 519–535 (PSVTLSKGDSDKSSSQV) and 548–567 (NAKQNSVPPSQTKSETNWES). Serine 567 is subject to Phosphoserine. Positions 570–581 (QIKKKKKARRET) are enriched in basic residues.

In terms of assembly, interacts with BCCIP, CREBBP/CBP and RELA/p65. In terms of tissue distribution, widely expressed, with highest levels in liver, kidney, prostate and small intestine. Not detected in endothelial cells.

It is found in the endoplasmic reticulum membrane. It localises to the nucleus membrane. Its subcellular location is the cell junction. The protein localises to the tight junction. The protein resides in the nucleus. It is found in the nucleolus. It localises to the cytoplasm. Its subcellular location is the perinuclear region. Down-regulates SLC1A2/EAAT2 promoter activity when expressed ectopically. Activates the nuclear factor kappa-B (NF-kappa-B) transcription factor. Promotes anchorage-independent growth of immortalized melanocytes and astrocytes which is a key component in tumor cell expansion. Promotes lung metastasis and also has an effect on bone and brain metastasis, possibly by enhancing the seeding of tumor cells to the target organ endothelium. Induces chemoresistance. The sequence is that of Protein LYRIC (Mtdh) from Rattus norvegicus (Rat).